The sequence spans 290 residues: Protein-glutamine deamidase Cif (290 aa).

The segment at 1-26 (MKISPNTISPSQSDPRMSTNVSQRSR) is disordered. Catalysis depends on residues C117, H173, and Q193.

This sequence belongs to the Cif family.

The protein resides in the secreted. Its subcellular location is the host nucleus. It catalyses the reaction L-glutaminyl-[protein] + H2O = L-glutamyl-[protein] + NH4(+). Its function is as follows. Protein-glutamine deamidase effector that inhibits the host cell cycle and other key cellular processes such as the actin network and programmed-cell death. Acts by mediating the side chain deamidation of 'Gln-40' of host NEDD8, converting it to glutamate, thereby abolishing the activity of cullin-RING-based E3 ubiquitin-protein ligase complexes (CRL complexes). Inactivation of CRL complexes prevents ubiquitination and subsequent degradation of the cyclin-dependent kinase inhibitors CDKN1A/p21 and CDKN1B/p27, leading to G1 and G2 cell cycle arrests in host cells. Also able to catalyze deamidation of 'Gln-40' of host ubiquitin in vitro; however, NEDD8 constitutes the preferred substrate in vivo. The protein is Protein-glutamine deamidase Cif of Yersinia pseudotuberculosis serotype O:3 (strain YPIII).